Here is a 469-residue protein sequence, read N- to C-terminus: Glutamate--tRNA ligase (469 aa).

The 'HIGH' region motif lies at 9-19; that stretch reads PSPTGYLHVGG. Residues C98, C100, C125, and D127 each contribute to the Zn(2+) site. A 'KMSKS' region motif is present at residues 237–241; it reads KLSKR. Residue K240 participates in ATP binding.

The protein belongs to the class-I aminoacyl-tRNA synthetase family. Glutamate--tRNA ligase type 1 subfamily. As to quaternary structure, monomer. It depends on Zn(2+) as a cofactor.

Its subcellular location is the cytoplasm. It carries out the reaction tRNA(Glu) + L-glutamate + ATP = L-glutamyl-tRNA(Glu) + AMP + diphosphate. Its function is as follows. Catalyzes the attachment of glutamate to tRNA(Glu) in a two-step reaction: glutamate is first activated by ATP to form Glu-AMP and then transferred to the acceptor end of tRNA(Glu). In Serratia proteamaculans (strain 568), this protein is Glutamate--tRNA ligase.